A 104-amino-acid polypeptide reads, in one-letter code: uncharacterized protein (104 aa).

It to A.aeolicus AQ_377.

This is an uncharacterized protein from Archaeoglobus fulgidus (strain ATCC 49558 / DSM 4304 / JCM 9628 / NBRC 100126 / VC-16).